Consider the following 274-residue polypeptide: Large ribosomal subunit protein uL2 (274 aa).

The interval 195 to 274 (VGNSDHGLER…SKYIIERRKK (80 aa)) is disordered. 2 stretches are compositionally biased toward basic residues: residues 207-220 (KAGR…RPRN) and 244-264 (PRSR…KKQS).

This sequence belongs to the universal ribosomal protein uL2 family. In terms of assembly, part of the 50S ribosomal subunit. Forms a bridge to the 30S subunit in the 70S ribosome.

Functionally, one of the primary rRNA binding proteins. Required for association of the 30S and 50S subunits to form the 70S ribosome, for tRNA binding and peptide bond formation. It has been suggested to have peptidyltransferase activity; this is somewhat controversial. Makes several contacts with the 16S rRNA in the 70S ribosome. This Bacteroides thetaiotaomicron (strain ATCC 29148 / DSM 2079 / JCM 5827 / CCUG 10774 / NCTC 10582 / VPI-5482 / E50) protein is Large ribosomal subunit protein uL2.